Here is a 193-residue protein sequence, read N- to C-terminus: A-type ATP synthase subunit E (193 aa).

The protein belongs to the V-ATPase E subunit family. Has multiple subunits with at least A(3), B(3), C, D, E, F, H, I and proteolipid K(x).

The protein localises to the cell membrane. Functionally, component of the A-type ATP synthase that produces ATP from ADP in the presence of a proton gradient across the membrane. The protein is A-type ATP synthase subunit E of Haloquadratum walsbyi (strain DSM 16790 / HBSQ001).